The sequence spans 402 residues: Multidrug resistance protein MdtH (402 aa).

Helical transmembrane passes span 13 to 33 (YFLL…FPLI), 34 to 54 (SIRF…ALGL), 99 to 116 (PWVL…GTLF), 139 to 159 (LLMM…SWLL), 165 to 185 (LVCS…AWYL), 214 to 234 (VLTL…LPIM), 243 to 263 (AAVK…LYPI), 277 to 297 (LMAG…TSSL), 300 to 320 (LFTL…ARET), 340 to 360 (LGLA…FDAG), and 368 to 388 (LPWL…WWQF).

Belongs to the major facilitator superfamily. DHA1 family. MdtH (TC 2.A.1.2.21) subfamily.

The protein resides in the cell inner membrane. The protein is Multidrug resistance protein MdtH of Klebsiella pneumoniae (strain 342).